Reading from the N-terminus, the 485-residue chain is CUGBP Elav-like family member 5 (485 aa).

Basic and acidic residues predominate over residues 1-11 (MARLTESEARR). A disordered region spans residues 1–40 (MARLTESEARRQQQQLLQPRPSPVGSSGPEPPGGQPDGMK). Residues 12-28 (QQQQLLQPRPSPVGSSG) show a composition bias toward low complexity. 3 consecutive RRM domains span residues 45-126 (IKLF…PADS), 134-214 (RKLF…FADT), and 400-478 (CNLF…LKRP).

It belongs to the CELF/BRUNOL family. As to expression, expressed in brain.

The protein localises to the nucleus. It is found in the cytoplasm. RNA-binding protein implicated in the regulation of pre-mRNA alternative splicing. Mediates exon inclusion and/or exclusion in pre-mRNA that are subject to tissue-specific and developmentally regulated alternative splicing. Specifically activates exon 5 inclusion of cardiac isoforms of TNNT2 during heart remodeling at the juvenile to adult transition. Binds to muscle-specific splicing enhancer (MSE) intronic sites flanking the alternative exon 5 of TNNT2 pre-mRNA. The chain is CUGBP Elav-like family member 5 (CELF5) from Homo sapiens (Human).